The primary structure comprises 490 residues: Acetyl-coenzyme A carboxylase carboxyl transferase subunit beta, chloroplastic (490 aa).

Residues 228–490 (LWVQCENCYG…FKLHAFFPLN (263 aa)) enclose the CoA carboxyltransferase N-terminal domain. Cys232, Cys235, Cys251, and Cys254 together coordinate Zn(2+). The C4-type zinc finger occupies 232 to 254 (CENCYGLNYKKLLKSKMNICDQC).

Belongs to the AccD/PCCB family. Acetyl-CoA carboxylase is a heterohexamer composed of biotin carboxyl carrier protein, biotin carboxylase and 2 subunits each of ACCase subunit alpha and ACCase plastid-coded subunit beta (accD). The cofactor is Zn(2+).

The protein localises to the plastid. It is found in the chloroplast stroma. The enzyme catalyses N(6)-carboxybiotinyl-L-lysyl-[protein] + acetyl-CoA = N(6)-biotinyl-L-lysyl-[protein] + malonyl-CoA. It functions in the pathway lipid metabolism; malonyl-CoA biosynthesis; malonyl-CoA from acetyl-CoA: step 1/1. Component of the acetyl coenzyme A carboxylase (ACC) complex. Biotin carboxylase (BC) catalyzes the carboxylation of biotin on its carrier protein (BCCP) and then the CO(2) group is transferred by the transcarboxylase to acetyl-CoA to form malonyl-CoA. In Eucalyptus globulus subsp. globulus (Tasmanian blue gum), this protein is Acetyl-coenzyme A carboxylase carboxyl transferase subunit beta, chloroplastic.